We begin with the raw amino-acid sequence, 490 residues long: N-succinylglutamate 5-semialdehyde dehydrogenase (490 aa).

220-225 (GSANTG) is a binding site for NAD(+). Catalysis depends on residues glutamate 243 and cysteine 277.

It belongs to the aldehyde dehydrogenase family. AstD subfamily.

It catalyses the reaction N-succinyl-L-glutamate 5-semialdehyde + NAD(+) + H2O = N-succinyl-L-glutamate + NADH + 2 H(+). It functions in the pathway amino-acid degradation; L-arginine degradation via AST pathway; L-glutamate and succinate from L-arginine: step 4/5. Functionally, catalyzes the NAD-dependent reduction of succinylglutamate semialdehyde into succinylglutamate. The chain is N-succinylglutamate 5-semialdehyde dehydrogenase from Shigella dysenteriae serotype 1 (strain Sd197).